A 398-amino-acid chain; its full sequence is Succinate--CoA ligase [ADP-forming] subunit beta (398 aa).

An ATP-grasp domain is found at 9-254 (KALLGEFGVP…ETEEDAKEIE (246 aa)). ATP contacts are provided by residues K46, 53–55 (GRG), E109, S112, and E117. Mg(2+) contacts are provided by N209 and D223. Substrate is bound by residues N274 and 331 to 333 (GIM).

Belongs to the succinate/malate CoA ligase beta subunit family. In terms of assembly, heterotetramer of two alpha and two beta subunits. Mg(2+) serves as cofactor.

It carries out the reaction succinate + ATP + CoA = succinyl-CoA + ADP + phosphate. It catalyses the reaction GTP + succinate + CoA = succinyl-CoA + GDP + phosphate. It participates in carbohydrate metabolism; tricarboxylic acid cycle; succinate from succinyl-CoA (ligase route): step 1/1. Succinyl-CoA synthetase functions in the citric acid cycle (TCA), coupling the hydrolysis of succinyl-CoA to the synthesis of either ATP or GTP and thus represents the only step of substrate-level phosphorylation in the TCA. The beta subunit provides nucleotide specificity of the enzyme and binds the substrate succinate, while the binding sites for coenzyme A and phosphate are found in the alpha subunit. The sequence is that of Succinate--CoA ligase [ADP-forming] subunit beta from Bradyrhizobium diazoefficiens (strain JCM 10833 / BCRC 13528 / IAM 13628 / NBRC 14792 / USDA 110).